A 333-amino-acid chain; its full sequence is MVISINQVRQLYVAKALKANTAALTTAGDIVPKADTAKTTLYFQSMSPAGIVASDKINLKHVLYAKATPSEALAHKLVRYSVTLDADVSATPVAGQNYILRLAFRQYIGLSEEDQYFKYGEVIARSGMTASDFYKKMAISLAKNLENKTESTPLVNIYLISAAAASTDVPVTSATKESDLTATDYNQIIIEETEQPWVLGMMPQAFIPFTPQFLTITVDGEDRLWGVATVVTPTKTVPDGHLIADLEYFCMGARGDIYRGMGYPNIIKTTYLVDPGAVYDVLDIHYFYTGSNESVQKSEKTITLVAVDDGSHTAMNALIGAINTASGLTIATL.

Positions His75–Val237 are FD.

In terms of assembly, interacts (via FD region) with the major capsid protein.

It is found in the virion. Auxiliary capsid protein that forms an outer layer on the major capsid protein protrusions. This is Auxiliary capsid protein from Bacteroides phage crAss001 (Bacteroides phage PhiCrAss001).